The primary structure comprises 731 residues: Putative pentatricopeptide repeat-containing protein At1g17630 (731 aa).

15 PPR repeats span residues 88-118 (SGSLAANLISVYARLGLLLDARNVFETVSLV), 122-156 (DLRLWNSILKANVSHGLYENALELYRGMRQRGLTG), 157-191 (DGYILPLILRACRYLGRFGLCRAFHTQVIQIGLKE), 192-222 (NLHVVNELLTLYPKAGRMGDAYNLFVEMPVR), 223-257 (NRMSWNVMIKGFSQEYDCESAVKIFEWMQREEFKP), 258-292 (DEVTWTSVLSCHSQCGKFEDVLKYFHLMRMSGNAV), 293-327 (SGEALAVFFSVCAELEALSIAEKVHGYVIKGGFEE), 328-358 (YLPSRNALIHVYGKQGKVKDAEHLFRQIRNK), 359-393 (GIESWNSLITSFVDAGKLDEALSLFSELEEMNHVC), 398-432 (NVVTWTSVIKGCNVQGRGDDSLEYFRQMQFSKVLA), 433-467 (NSVTICCILSICAELPALNLGREIHGHVIRTSMSE), 468-498 (NILVQNALVNMYAKCGLLSEGSLVFEAIRDK), 499-533 (DLISWNSIIKGYGMHGFAEKALSMFDRMISSGFHP), 534-569 (DGIALVAVLSACSHAGLVEKGREIFYSMSKRFGLEP), and 570-600 (QQEHYACIVDLLGRVGFLKEASEIVKNMPME). Residues 605 to 680 (VLGALLNSCR…VSGSSWIEVK (76 aa)) are type E motif. The tract at residues 681–711 (KKKYKFSSGSIVQSEFETIYPVLEDLVSHML) is type E(+) motif.

The protein belongs to the PPR family. PCMP-E subfamily.

The protein is Putative pentatricopeptide repeat-containing protein At1g17630 (PCMP-E72) of Arabidopsis thaliana (Mouse-ear cress).